A 220-amino-acid chain; its full sequence is Telomere repeats-binding bouquet formation protein 2 (220 aa).

Belongs to the TERB2 family. In terms of assembly, component of the MAJIN-TERB1-TERB2 complex, composed of MAJIN, TERB1 and TERB2.

It is found in the chromosome. Its subcellular location is the telomere. The protein localises to the nucleus inner membrane. Its function is as follows. Meiosis-specific telomere-associated protein involved in meiotic telomere attachment to the nucleus inner membrane, a crucial step for homologous pairing and synapsis. Component of the MAJIN-TERB1-TERB2 complex, which promotes telomere cap exchange by mediating attachment of telomeric DNA to the inner nuclear membrane and replacement of the protective cap of telomeric chromosomes: in early meiosis, the MAJIN-TERB1-TERB2 complex associates with telomeric DNA and the shelterin/telosome complex. During prophase, the complex matures and promotes release of the shelterin/telosome complex from telomeric DNA. This Homo sapiens (Human) protein is Telomere repeats-binding bouquet formation protein 2 (TERB2).